A 182-amino-acid chain; its full sequence is UPF0397 protein BcerKBAB4_2500 (182 aa).

5 consecutive transmembrane segments (helical) span residues 9-29 (VVAI…GFSI), 40-60 (AILT…IGLI), 71-91 (WGIW…MGLI), 114-134 (IAGL…DIIV), and 142-162 (IVIQ…VLGL).

This sequence belongs to the UPF0397 family.

Its subcellular location is the cell membrane. This Bacillus mycoides (strain KBAB4) (Bacillus weihenstephanensis) protein is UPF0397 protein BcerKBAB4_2500.